We begin with the raw amino-acid sequence, 525 residues long: Mitochondrial-processing peptidase subunit alpha (525 aa).

The N-terminal 33 residues, 1–33 (MAAMVLAATRLLRGSGSWGRSRPRFGDPAYRRF), are a transit peptide targeting the mitochondrion. K64 is modified (N6-succinyllysine). K299 is subject to N6-acetyllysine.

The protein belongs to the peptidase M16 family. Heterodimer of PMPCA (alpha) and PMPCB (beta) subunits, forming the mitochondrial processing protease (MPP) in which PMPCA is involved in substrate recognition and binding and PMPCB is the catalytic subunit.

The protein resides in the mitochondrion matrix. Its subcellular location is the mitochondrion inner membrane. In terms of biological role, substrate recognition and binding subunit of the essential mitochondrial processing protease (MPP), which cleaves the mitochondrial sequence off newly imported precursors proteins. In Bos taurus (Bovine), this protein is Mitochondrial-processing peptidase subunit alpha (PMPCA).